A 629-amino-acid polypeptide reads, in one-letter code: uncharacterized protein (629 aa).

Met1 carries the post-translational modification N-acetylmethionine. Positions 308-395 (VDPEPEPDPP…PGRRSRARNA (88 aa)) are disordered. The segment covering 322–334 (SANEPASQPNSRS) has biased composition (polar residues). The region spanning 451-587 (LVIFVVDASG…VAEGAAAVVV (137 aa)) is the VWFA domain.

The protein belongs to the Mg-chelatase subunits D/I family.

This is an uncharacterized protein from Mycobacterium tuberculosis (strain ATCC 25618 / H37Rv).